We begin with the raw amino-acid sequence, 440 residues long: Glutamyl-tRNA reductase (440 aa).

Substrate-binding positions include 55–58 (TCNR), Ser-115, 120–122 (ETQ), and Gln-126. Cys-56 serves as the catalytic Nucleophile. 199 to 204 (GSGEMG) contributes to the NADP(+) binding site.

This sequence belongs to the glutamyl-tRNA reductase family. As to quaternary structure, homodimer.

It catalyses the reaction (S)-4-amino-5-oxopentanoate + tRNA(Glu) + NADP(+) = L-glutamyl-tRNA(Glu) + NADPH + H(+). The protein operates within porphyrin-containing compound metabolism; protoporphyrin-IX biosynthesis; 5-aminolevulinate from L-glutamyl-tRNA(Glu): step 1/2. Its function is as follows. Catalyzes the NADPH-dependent reduction of glutamyl-tRNA(Glu) to glutamate 1-semialdehyde (GSA). The sequence is that of Glutamyl-tRNA reductase from Helicobacter hepaticus (strain ATCC 51449 / 3B1).